Here is a 1147-residue protein sequence, read N- to C-terminus: Myosin heavy chain IB (1147 aa).

The Myosin motor domain maps to 9–677; the sequence is RGVDDLVLMP…TLFHLEECLD (669 aa). 103–110 serves as a coordination point for ATP; the sequence is GESGAGKT. At S315 the chain carries Phosphoserine. The segment at 551–573 is actin-binding; that stretch reads CDALMEALSRCSPHYIRCIKPND. One can recognise a TH1 domain in the interval 715–900; it reads KERQRHSVNR…RANIQIGIAT (186 aa). Disordered stretches follow at residues 901 to 954 and 969 to 1089; these read GLPK…YSQP and AAVP…APAA. 2 stretches are compositionally biased toward gly residues: residues 916–951 and 975–1079; these read SGGG…GGGY and GRGG…GAGR. An SH3 domain is found at 1090–1147; it reads PAKPQVKALYDYDAQTGDELTFKEGDTIIVHQKDPAGWWEGELNGKRGWVPANYVQDI.

The protein belongs to the TRAFAC class myosin-kinesin ATPase superfamily. Myosin family. As to quaternary structure, myosin I heavy chain is single-headed. Dimer of a heavy and a light chain. Inability to self-assemble into filaments.

In terms of biological role, myosin is a protein that binds to F-actin and has ATPase activity that is activated by F-actin. The sequence is that of Myosin heavy chain IB (MIB) from Acanthamoeba castellanii (Amoeba).